The primary structure comprises 40 residues: Dolichyl-diphosphooligosaccharide--protein glycosyltransferase subunit 4 (40 aa).

The Lumenal segment spans residues 1–4 (MITD). The helical transmembrane segment at 5–25 (VQLAIFSNVLGVFLFLLVVAY) threads the bilayer. At 26–40 (HYINANTGKPSAKAK) the chain is on the cytoplasmic side.

Belongs to the OST4 family. Component of the oligosaccharyltransferase (OST) complex.

It localises to the endoplasmic reticulum membrane. Subunit of the oligosaccharyl transferase (OST) complex that catalyzes the initial transfer of a defined glycan (Glc(3)Man(9)GlcNAc(2) in eukaryotes) from the lipid carrier dolichol-pyrophosphate to an asparagine residue within an Asn-X-Ser/Thr consensus motif in nascent polypeptide chains, the first step in protein N-glycosylation. N-glycosylation occurs cotranslationally and the complex associates with the Sec61 complex at the channel-forming translocon complex that mediates protein translocation across the endoplasmic reticulum (ER). All subunits are required for a maximal enzyme activity. The protein is Dolichyl-diphosphooligosaccharide--protein glycosyltransferase subunit 4 of Drosophila erecta (Fruit fly).